Consider the following 71-residue polypeptide: UPF0434 protein APH_0052 (71 aa).

Over residues 52–63 (RKLQPEEPKEGS) the composition is skewed to basic and acidic residues. Positions 52 to 71 (RKLQPEEPKEGSELQSSDNQ) are disordered.

Belongs to the UPF0434 family.

This chain is UPF0434 protein APH_0052, found in Anaplasma phagocytophilum (strain HZ).